Consider the following 182-residue polypeptide: Negative transcriptional regulator PadR (182 aa).

This sequence belongs to the PadR family. Homodimer.

It localises to the cytoplasm. PadR repressor activity is inhibited in the presence of phenolic acids, which directly modulate PadR binding to the promoter of padC, leading to the dissociation of PadR from the operator DNA and expression of padC. In the presence of MgCl(2), binding is not altered by phenolic acids. Its function is as follows. Transcriptional regulator involved in the regulation of the metabolism of phenolic acids. In the absence of phenolic acids, represses the expression of padC, which encodes a phenolic acid decarboxylase (PAD) involved in the detoxification of harmful phenolic acids. Acts by binding to the padC promoter region, preventing the transcription of the gene. The protein is Negative transcriptional regulator PadR of Bacillus subtilis (strain 168).